A 194-amino-acid chain; its full sequence is Imidazoleglycerol-phosphate dehydratase (194 aa).

This sequence belongs to the imidazoleglycerol-phosphate dehydratase family.

It localises to the cytoplasm. The catalysed reaction is D-erythro-1-(imidazol-4-yl)glycerol 3-phosphate = 3-(imidazol-4-yl)-2-oxopropyl phosphate + H2O. It participates in amino-acid biosynthesis; L-histidine biosynthesis; L-histidine from 5-phospho-alpha-D-ribose 1-diphosphate: step 6/9. This is Imidazoleglycerol-phosphate dehydratase from Caldicellulosiruptor bescii (strain ATCC BAA-1888 / DSM 6725 / KCTC 15123 / Z-1320) (Anaerocellum thermophilum).